Consider the following 587-residue polypeptide: Glutathione hydrolase proenzyme (587 aa).

The N-terminal stretch at 1 to 28 is a signal peptide; the sequence is MKRTWNVCLTALLSVLLVAGSVPFHAEA. A propeptide spanning residues 29–35 is cleaved from the precursor; sequence KKPPKSY. Residue arginine 113 coordinates L-glutamate. Threonine 403 functions as the Nucleophile in the catalytic mechanism. L-glutamate contacts are provided by residues threonine 421, glutamate 423, glutamate 442, aspartate 445, 464–465, and 485–486; these read SS and GG.

The protein belongs to the gamma-glutamyltransferase family. In terms of assembly, this enzyme consists of two polypeptide chains, which are synthesized in precursor form from a single polypeptide. Cleaved by autocatalysis into a large and small subunit.

The protein localises to the secreted. The enzyme catalyses an N-terminal (5-L-glutamyl)-[peptide] + an alpha-amino acid = 5-L-glutamyl amino acid + an N-terminal L-alpha-aminoacyl-[peptide]. It carries out the reaction glutathione + H2O = L-cysteinylglycine + L-glutamate. It catalyses the reaction an S-substituted glutathione + H2O = an S-substituted L-cysteinylglycine + L-glutamate. It functions in the pathway sulfur metabolism; glutathione metabolism. Inhibited by glucose. Its function is as follows. Cleaves the gamma-glutamyl bond of extracellular glutathione (gamma-Glu-Cys-Gly), glutathione conjugates, and other gamma-glutamyl compounds. The metabolism of glutathione releases free glutamate and the dipeptide cysteinyl-glycine, which is hydrolyzed to cysteine and glycine by dipeptidases. Uses glutamine as a gamma-glutamyl donor and acceptor for gamma-polyglutamic acid synthesis. Dipeptides are better gamma-glutamyl acceptors than free amino acids. This is Glutathione hydrolase proenzyme (ggt) from Bacillus subtilis subsp. natto.